Consider the following 156-residue polypeptide: MNLNATLFAQMVVFLVLAWFTMKFVWPPLINALDERSKKIADGLAAAEKGKAELEAAHKRVDQELAQARNDGQQRIADAEKRALAVADEIKTNAQAEAARIIAQAKAEAEQQIVKARETLRGEVAALAVKGAEQILKREVDQTAHAELLNQLKAEL.

Residues 7 to 29 (LFAQMVVFLVLAWFTMKFVWPPL) traverse the membrane as a helical segment.

It belongs to the ATPase B chain family. In terms of assembly, F-type ATPases have 2 components, F(1) - the catalytic core - and F(0) - the membrane proton channel. F(1) has five subunits: alpha(3), beta(3), gamma(1), delta(1), epsilon(1). F(0) has three main subunits: a(1), b(2) and c(10-14). The alpha and beta chains form an alternating ring which encloses part of the gamma chain. F(1) is attached to F(0) by a central stalk formed by the gamma and epsilon chains, while a peripheral stalk is formed by the delta and b chains.

It is found in the cell inner membrane. Its function is as follows. F(1)F(0) ATP synthase produces ATP from ADP in the presence of a proton or sodium gradient. F-type ATPases consist of two structural domains, F(1) containing the extramembraneous catalytic core and F(0) containing the membrane proton channel, linked together by a central stalk and a peripheral stalk. During catalysis, ATP synthesis in the catalytic domain of F(1) is coupled via a rotary mechanism of the central stalk subunits to proton translocation. In terms of biological role, component of the F(0) channel, it forms part of the peripheral stalk, linking F(1) to F(0). The polypeptide is ATP synthase subunit b (Burkholderia pseudomallei (strain 668)).